Reading from the N-terminus, the 179-residue chain is Endoribonuclease YbeY (179 aa).

Zn(2+)-binding residues include His-141, His-145, and His-151.

The protein belongs to the endoribonuclease YbeY family. It depends on Zn(2+) as a cofactor.

It localises to the cytoplasm. Single strand-specific metallo-endoribonuclease involved in late-stage 70S ribosome quality control and in maturation of the 3' terminus of the 16S rRNA. This chain is Endoribonuclease YbeY, found in Synechocystis sp. (strain ATCC 27184 / PCC 6803 / Kazusa).